We begin with the raw amino-acid sequence, 545 residues long: T-box transcription factor TBX4 (545 aa).

The segment at residues 71-251 (LHEKELWKKF…NNPFAKGFRG (181 aa)) is a DNA-binding region (T-box). Residues 479–509 (QSQVRERGPSASFPRERGLPQGCERKPPSPH) form a disordered region. Residues 482–505 (VRERGPSASFPRERGLPQGCERKP) show a composition bias toward basic and acidic residues. Position 507 is a phosphoserine (serine 507).

The protein resides in the nucleus. Transcriptional regulator that has an essential role in the organogenesis of lungs, pelvis, and hindlimbs. The polypeptide is T-box transcription factor TBX4 (TBX4) (Homo sapiens (Human)).